The following is a 130-amino-acid chain: Small ribosomal subunit protein uS11 (130 aa).

Belongs to the universal ribosomal protein uS11 family. In terms of assembly, part of the 30S ribosomal subunit. Interacts with proteins S7 and S18. Binds to IF-3.

Its function is as follows. Located on the platform of the 30S subunit, it bridges several disparate RNA helices of the 16S rRNA. Forms part of the Shine-Dalgarno cleft in the 70S ribosome. This chain is Small ribosomal subunit protein uS11, found in Shewanella amazonensis (strain ATCC BAA-1098 / SB2B).